The sequence spans 538 residues: uncharacterized protein (538 aa).

Disordered stretches follow at residues 20–71 (RLSA…GGAQ), 151–211 (LWAE…EHPK), 288–331 (MLQP…QQHK), and 458–482 (EFEK…LKNY). Basic and acidic residues predominate over residues 154–171 (ESEKSESKGTRRDFRSYD).

This is an uncharacterized protein from Homo sapiens (Human).